The chain runs to 854 residues: Protein translocase subunit SecA (854 aa).

ATP-binding positions include glutamine 89, 107-111 (GEGKT), and aspartate 501.

This sequence belongs to the SecA family. As to quaternary structure, monomer and homodimer. Part of the essential Sec protein translocation apparatus which comprises SecA, SecYEG and auxiliary proteins SecDF-YajC and YidC.

It localises to the cell inner membrane. It is found in the cytoplasm. It carries out the reaction ATP + H2O + cellular proteinSide 1 = ADP + phosphate + cellular proteinSide 2.. Part of the Sec protein translocase complex. Interacts with the SecYEG preprotein conducting channel. Has a central role in coupling the hydrolysis of ATP to the transfer of proteins into and across the cell membrane, serving both as a receptor for the preprotein-SecB complex and as an ATP-driven molecular motor driving the stepwise translocation of polypeptide chains across the membrane. This is Protein translocase subunit SecA from Pelagibacter ubique (strain HTCC1062).